A 485-amino-acid chain; its full sequence is tRNA sulfurtransferase (485 aa).

The region spanning 63 to 167 (ERYAERLACI…NEHLYLVEKR (105 aa)) is the THUMP domain. ATP is bound by residues 185-186 (LI), K267, G289, and Q298. A disulfide bridge connects residues C346 and C458. The 79-residue stretch at 406 to 484 (VSGGEVVVDI…GYHNVKVYRP (79 aa)) folds into the Rhodanese domain. The active-site Cysteine persulfide intermediate is C458.

This sequence belongs to the ThiI family.

The protein localises to the cytoplasm. It carries out the reaction [ThiI sulfur-carrier protein]-S-sulfanyl-L-cysteine + a uridine in tRNA + 2 reduced [2Fe-2S]-[ferredoxin] + ATP + H(+) = [ThiI sulfur-carrier protein]-L-cysteine + a 4-thiouridine in tRNA + 2 oxidized [2Fe-2S]-[ferredoxin] + AMP + diphosphate. The catalysed reaction is [ThiS sulfur-carrier protein]-C-terminal Gly-Gly-AMP + S-sulfanyl-L-cysteinyl-[cysteine desulfurase] + AH2 = [ThiS sulfur-carrier protein]-C-terminal-Gly-aminoethanethioate + L-cysteinyl-[cysteine desulfurase] + A + AMP + 2 H(+). It participates in cofactor biosynthesis; thiamine diphosphate biosynthesis. In terms of biological role, catalyzes the ATP-dependent transfer of a sulfur to tRNA to produce 4-thiouridine in position 8 of tRNAs, which functions as a near-UV photosensor. Also catalyzes the transfer of sulfur to the sulfur carrier protein ThiS, forming ThiS-thiocarboxylate. This is a step in the synthesis of thiazole, in the thiamine biosynthesis pathway. The sulfur is donated as persulfide by IscS. This chain is tRNA sulfurtransferase, found in Shewanella loihica (strain ATCC BAA-1088 / PV-4).